The chain runs to 284 residues: Release factor glutamine methyltransferase (284 aa).

S-adenosyl-L-methionine-binding positions include glycine 123–glycine 127, aspartate 146, tryptophan 174, and asparagine 189. Asparagine 189–tyrosine 192 serves as a coordination point for substrate.

Belongs to the protein N5-glutamine methyltransferase family. PrmC subfamily.

The enzyme catalyses L-glutaminyl-[peptide chain release factor] + S-adenosyl-L-methionine = N(5)-methyl-L-glutaminyl-[peptide chain release factor] + S-adenosyl-L-homocysteine + H(+). In terms of biological role, methylates the class 1 translation termination release factors RF1/PrfA and RF2/PrfB on the glutamine residue of the universally conserved GGQ motif. In Francisella tularensis subsp. tularensis (strain SCHU S4 / Schu 4), this protein is Release factor glutamine methyltransferase.